The sequence spans 296 residues: Protoheme IX farnesyltransferase (296 aa).

9 consecutive transmembrane segments (helical) span residues 29 to 49, 54 to 74, 98 to 118, 121 to 141, 147 to 167, 175 to 195, 221 to 241, 246 to 266, and 275 to 295; these read LSGL…GHVA, ALTV…NCWM, FTAL…LALV, PLTA…YTPM, LALL…WTAA, GLAL…AVSI, WIAA…PLRV, YGAV…AGVG, and NFFL…FLGA.

It belongs to the UbiA prenyltransferase family. Protoheme IX farnesyltransferase subfamily.

The protein resides in the cell inner membrane. The catalysed reaction is heme b + (2E,6E)-farnesyl diphosphate + H2O = Fe(II)-heme o + diphosphate. It functions in the pathway porphyrin-containing compound metabolism; heme O biosynthesis; heme O from protoheme: step 1/1. Its function is as follows. Converts heme B (protoheme IX) to heme O by substitution of the vinyl group on carbon 2 of heme B porphyrin ring with a hydroxyethyl farnesyl side group. This Anaeromyxobacter sp. (strain Fw109-5) protein is Protoheme IX farnesyltransferase.